The chain runs to 173 residues: DRBM domain-containing protein 340R (173 aa).

One can recognise a DRBM domain in the interval 30-102; the sequence is NSIGFLNEFC…AFKTIKELNL (73 aa).

The chain is DRBM domain-containing protein 340R from Invertebrate iridescent virus 6 (IIV-6).